The primary structure comprises 509 residues: Dihydrolipoyl dehydrogenase, mitochondrial (509 aa).

Residues 1 to 35 constitute a mitochondrion transit peptide; the sequence is MQSWSRVYCTLAKRGHFNRIAHGLQGVSAVPLRTY. The residue at position 66 (lysine 66) is an N6-acetyllysine; alternate. Lysine 66 is modified (N6-succinyllysine; alternate). Residues 71 to 80 and lysine 89 contribute to the FAD site; that span reads EKNETLGGTC. Cysteine 80 and cysteine 85 form a disulfide bridge. N6-acetyllysine; alternate occurs at positions 104, 122, 132, and 143. An N6-succinyllysine; alternate mark is found at lysine 104, lysine 122, lysine 132, and lysine 143. Position 154 (glycine 154) interacts with FAD. An N6-succinyllysine mark is found at lysine 159 and lysine 166. 183-185 serves as a coordination point for FAD; sequence TGS. NAD(+) contacts are provided by residues 220-227 and glutamate 243; that span reads GAGVIGVE. 2 positions are modified to N6-succinyllysine: lysine 273 and lysine 277. Valine 278 is a binding site for NAD(+). Phosphoserine occurs at positions 285 and 297. An NAD(+)-binding site is contributed by glycine 314. Lysine 346 carries the N6-acetyllysine modification. FAD-binding positions include aspartate 355 and 361–364; that span reads MLAH. N6-acetyllysine; alternate is present on lysine 410. Lysine 410 carries the post-translational modification N6-succinyllysine; alternate. N6-acetyllysine is present on residues lysine 417 and lysine 420. The residue at position 430 (lysine 430) is an N6-succinyllysine. The active-site Proton acceptor is histidine 487. Position 502 is a phosphoserine (serine 502). N6-acetyllysine; alternate is present on lysine 505. N6-succinyllysine; alternate is present on lysine 505.

The protein belongs to the class-I pyridine nucleotide-disulfide oxidoreductase family. In terms of assembly, homodimer. Part of the multimeric pyruvate dehydrogenase complex that contains multiple copies of pyruvate dehydrogenase (subunits PDHA (PDHA1 or PDHA2) and PDHB, E1), dihydrolipoamide acetyltransferase (DLAT, E2) and lipoamide dehydrogenase (DLD, E3). These subunits are bound to an inner core composed of about 48 DLAT and 12 PDHX molecules (by non covalent bonds). The 2-oxoglutarate dehydrogenase complex is composed of OGDH (2-oxoglutarate dehydrogenase; E1), DLST (dihydrolipoamide succinyltransferase; E2), DLD (dihydrolipoamide dehydrogenase; E3) and the assembly factor KGD4. It contains multiple copies of the three enzymatic components (E1, E2 and E3). In the nucleus, the 2-oxoglutarate dehydrogenase complex associates with KAT2A. Interacts with PDHX. It depends on FAD as a cofactor. Post-translationally, tyrosine phosphorylated. As to expression, expressed in heart (at protein level).

It localises to the mitochondrion matrix. Its subcellular location is the nucleus. The protein localises to the cell projection. It is found in the cilium. The protein resides in the flagellum. It localises to the cytoplasmic vesicle. Its subcellular location is the secretory vesicle. The protein localises to the acrosome. The catalysed reaction is N(6)-[(R)-dihydrolipoyl]-L-lysyl-[protein] + NAD(+) = N(6)-[(R)-lipoyl]-L-lysyl-[protein] + NADH + H(+). In terms of biological role, lipoamide dehydrogenase is a component of the glycine cleavage system as well as an E3 component of three alpha-ketoacid dehydrogenase complexes (pyruvate-, alpha-ketoglutarate-, and branched-chain amino acid-dehydrogenase complex). The 2-oxoglutarate dehydrogenase complex is mainly active in the mitochondrion. A fraction of the 2-oxoglutarate dehydrogenase complex also localizes in the nucleus and is required for lysine succinylation of histones: associates with KAT2A on chromatin and provides succinyl-CoA to histone succinyltransferase KAT2A. In monomeric form may have additional moonlighting function as serine protease. Involved in the hyperactivation of spermatazoa during capacitation and in the spermatazoal acrosome reaction. This Sus scrofa (Pig) protein is Dihydrolipoyl dehydrogenase, mitochondrial (DLD).